A 184-amino-acid chain; its full sequence is Shikimate kinase (184 aa).

Gly-12–Thr-17 is a binding site for ATP. Ser-16 contacts Mg(2+). Asp-34, Arg-58, and Gly-80 together coordinate substrate. Arg-117 serves as a coordination point for ATP. Arg-136 lines the substrate pocket. Arg-153 serves as a coordination point for ATP. Positions Met-163 to Thr-184 are disordered. The span at Pro-169–Thr-184 shows a compositional bias: low complexity.

The protein belongs to the shikimate kinase family. As to quaternary structure, monomer. Requires Mg(2+) as cofactor.

It localises to the cytoplasm. The enzyme catalyses shikimate + ATP = 3-phosphoshikimate + ADP + H(+). Its pathway is metabolic intermediate biosynthesis; chorismate biosynthesis; chorismate from D-erythrose 4-phosphate and phosphoenolpyruvate: step 5/7. Catalyzes the specific phosphorylation of the 3-hydroxyl group of shikimic acid using ATP as a cosubstrate. This Mycobacterium marinum (strain ATCC BAA-535 / M) protein is Shikimate kinase.